The sequence spans 353 residues: Dihydroorotate dehydrogenase (quinone) (353 aa).

Residues 67-71 and T91 contribute to the FMN site; that span reads AGFDK. K71 is a binding site for substrate. 116–120 is a substrate binding site; it reads NRMGF. The FMN site is built by N144 and N177. Position 177 (N177) interacts with substrate. The active-site Nucleophile is the S180. A substrate-binding site is contributed by N182. Residues K213 and T241 each coordinate FMN. 242 to 243 is a binding site for substrate; that stretch reads NT. FMN-binding positions include G265, G294, and 315–316; that span reads YT.

This sequence belongs to the dihydroorotate dehydrogenase family. Type 2 subfamily. As to quaternary structure, monomer. FMN serves as cofactor.

It localises to the cell membrane. The enzyme catalyses (S)-dihydroorotate + a quinone = orotate + a quinol. Its pathway is pyrimidine metabolism; UMP biosynthesis via de novo pathway; orotate from (S)-dihydroorotate (quinone route): step 1/1. Its function is as follows. Catalyzes the conversion of dihydroorotate to orotate with quinone as electron acceptor. This Mycobacteroides abscessus (strain ATCC 19977 / DSM 44196 / CCUG 20993 / CIP 104536 / JCM 13569 / NCTC 13031 / TMC 1543 / L948) (Mycobacterium abscessus) protein is Dihydroorotate dehydrogenase (quinone).